Here is a 332-residue protein sequence, read N- to C-terminus: Ribosomal RNA small subunit methyltransferase C (332 aa).

It belongs to the methyltransferase superfamily. RsmC family. As to quaternary structure, monomer.

The protein localises to the cytoplasm. The catalysed reaction is guanosine(1207) in 16S rRNA + S-adenosyl-L-methionine = N(2)-methylguanosine(1207) in 16S rRNA + S-adenosyl-L-homocysteine + H(+). Its function is as follows. Specifically methylates the guanine in position 1207 of 16S rRNA in the 30S particle. In Pseudomonas paraeruginosa (strain DSM 24068 / PA7) (Pseudomonas aeruginosa (strain PA7)), this protein is Ribosomal RNA small subunit methyltransferase C.